The chain runs to 339 residues: Anthranilate phosphoribosyltransferase (339 aa).

Residues Gly79, 82–83 (GD), Ser87, 89–92 (NIST), 107–115 (KHGNRAASS), and Ala119 contribute to the 5-phospho-alpha-D-ribose 1-diphosphate site. Gly79 contacts anthranilate. Position 91 (Ser91) interacts with Mg(2+). Asn110 is a binding site for anthranilate. Arg165 lines the anthranilate pocket. Mg(2+) is bound by residues Asp224 and Glu225.

Belongs to the anthranilate phosphoribosyltransferase family. Homodimer. Mg(2+) serves as cofactor.

It catalyses the reaction N-(5-phospho-beta-D-ribosyl)anthranilate + diphosphate = 5-phospho-alpha-D-ribose 1-diphosphate + anthranilate. It functions in the pathway amino-acid biosynthesis; L-tryptophan biosynthesis; L-tryptophan from chorismate: step 2/5. In terms of biological role, catalyzes the transfer of the phosphoribosyl group of 5-phosphorylribose-1-pyrophosphate (PRPP) to anthranilate to yield N-(5'-phosphoribosyl)-anthranilate (PRA). The protein is Anthranilate phosphoribosyltransferase of Lactiplantibacillus plantarum (strain ATCC BAA-793 / NCIMB 8826 / WCFS1) (Lactobacillus plantarum).